The primary structure comprises 448 residues: Phosphoglucosamine mutase (448 aa).

Ser100 functions as the Phosphoserine intermediate in the catalytic mechanism. Residues Ser100, Asp240, Asp242, and Asp244 each coordinate Mg(2+). The residue at position 100 (Ser100) is a Phosphoserine.

This sequence belongs to the phosphohexose mutase family. Requires Mg(2+) as cofactor. In terms of processing, activated by phosphorylation.

The catalysed reaction is alpha-D-glucosamine 1-phosphate = D-glucosamine 6-phosphate. Its function is as follows. Catalyzes the conversion of glucosamine-6-phosphate to glucosamine-1-phosphate. This Bacillus cytotoxicus (strain DSM 22905 / CIP 110041 / 391-98 / NVH 391-98) protein is Phosphoglucosamine mutase.